A 774-amino-acid chain; its full sequence is Chondroitin sulfate synthase 2 (774 aa).

Residues 1–15 (MRASLLLSVLRPAGP) are Cytoplasmic-facing. A helical; Signal-anchor for type II membrane protein transmembrane segment spans residues 16-34 (VAVGISLGFTLSLLSVTWV). Topologically, residues 35 to 774 (EEPCGPGPPQ…LFEQEQGNST (740 aa)) are lumenal. Residues 37–103 (PCGPGPPQPG…AQPGQATKKA (67 aa)) form a disordered region. Polar residues predominate over residues 54–67 (GNTNAARRPNSVQP). 2 N-linked (GlcNAc...) asparagine glycosylation sites follow: Asn-138 and Asn-361. Asp-616 contributes to the a divalent metal cation binding site.

The protein belongs to the chondroitin N-acetylgalactosaminyltransferase family. As to quaternary structure, interacts with PRKN. The cofactor is Mn(2+). Co(2+) serves as cofactor. As to expression, isoform 1, isoform 2 and isoform 3 are expressed in brain (at protein level).

It localises to the golgi apparatus. The protein localises to the golgi stack membrane. The protein resides in the cytoplasm. It is found in the cytosol. Its subcellular location is the mitochondrion. It localises to the mitochondrion matrix. The catalysed reaction is 3-O-(beta-D-GlcA-(1-&gt;3)-beta-D-GalNAc-(1-&gt;4)-beta-D-GlcA-(1-&gt;3)-beta-D-Gal-(1-&gt;3)-beta-D-Gal-(1-&gt;4)-beta-D-Xyl)-L-seryl-[protein] + UDP-N-acetyl-alpha-D-galactosamine = 3-O-(beta-D-GalNAc-(1-&gt;4)-beta-D-GlcA-(1-&gt;3)-beta-D-GalNAc-(1-&gt;4)-beta-D-GlcA-(1-&gt;3)-beta-D-Gal-(1-&gt;3)-beta-D-Gal-(1-&gt;4)-beta-D-Xyl)-L-seryl-[protein] + UDP + H(+). It catalyses the reaction 3-O-{beta-D-GlcA-(1-&gt;3)-[beta-D-GalNAc-(1-&gt;4)-beta-D-GlcA-(1-&gt;3)](n)-beta-D-GalNAc-(1-&gt;4)-beta-D-GlcA-(1-&gt;3)-beta-D-Gal-(1-&gt;3)-beta-D-Gal-(1-&gt;4)-beta-D-Xyl}-L-seryl-[protein] + UDP-N-acetyl-alpha-D-galactosamine = 3-O-{[beta-D-GalNAc-(1-&gt;4)-beta-D-GlcA-(1-&gt;3)](n+1)-beta-D-GalNAc-(1-&gt;4)-beta-D-GlcA-(1-&gt;3)-beta-D-Gal-(1-&gt;3)-beta-D-Gal-(1-&gt;4)-beta-D-Xyl}-L-seryl-[protein] + UDP + H(+). The enzyme catalyses 3-O-(beta-D-GalNAc-(1-&gt;4)-beta-D-GlcA-(1-&gt;3)-beta-D-Gal-(1-&gt;3)-beta-D-Gal-(1-&gt;4)-beta-D-Xyl)-L-seryl-[protein] + UDP-alpha-D-glucuronate = 3-O-(beta-D-GlcA-(1-&gt;3)-beta-D-GalNAc-(1-&gt;4)-beta-D-GlcA-(1-&gt;3)-beta-D-Gal-(1-&gt;3)-beta-D-Gal-(1-&gt;4)-beta-D-Xyl)-L-seryl-[protein] + UDP + H(+). It carries out the reaction 3-O-{[beta-D-GalNAc-(1-&gt;4)-beta-D-GlcA-(1-&gt;3)](n)-beta-D-GalNAc-(1-&gt;4)-beta-D-GlcA-(1-&gt;3)-beta-D-Gal-(1-&gt;3)-beta-D-Gal-(1-&gt;4)-beta-D-Xyl}-L-seryl-[protein] + UDP-alpha-D-glucuronate = 3-O-{beta-D-GlcA-(1-&gt;3)-[beta-D-GalNAc-(1-&gt;4)-beta-D-GlcA-(1-&gt;3)](n)-beta-D-GalNAc-(1-&gt;4)-beta-D-GlcA-(1-&gt;3)-beta-D-Gal-(1-&gt;3)-beta-D-Gal-(1-&gt;4)-beta-D-Xyl}-L-seryl-[protein] + UDP + H(+). Has both beta-1,3-glucuronic acid and beta-1,4-N-acetylgalactosamine transferase activity. Transfers glucuronic acid (GlcUA) from UDP-GlcUA and N-acetylgalactosamine (GalNAc) from UDP-GalNAc to the non-reducing end of the elongating chondroitin polymer. Seems to act as a specific activating factor for CHSY1 in chondroitin polymerization. Its function is as follows. May facilitate PRKN transport into the mitochondria. In collaboration with PRKN, may enhance cell viability and protect cells from oxidative stress. This Mus musculus (Mouse) protein is Chondroitin sulfate synthase 2.